We begin with the raw amino-acid sequence, 146 residues long: Hemoglobin subunit beta-0 (146 aa).

A Globin domain is found at E2–H146. Heme b-binding residues include H63 and H92.

This sequence belongs to the globin family. As to quaternary structure, heterotetramer of two alpha chains and two beta chains. As to expression, red blood cells.

Functionally, involved in oxygen transport from gills to the various peripheral tissues. The chain is Hemoglobin subunit beta-0 (hbb0) from Pagothenia borchgrevinki (Bald rockcod).